Here is a 156-residue protein sequence, read N- to C-terminus: Small ribosomal subunit protein uS7 (156 aa).

It belongs to the universal ribosomal protein uS7 family. In terms of assembly, part of the 30S ribosomal subunit. Contacts proteins S9 and S11.

Functionally, one of the primary rRNA binding proteins, it binds directly to 16S rRNA where it nucleates assembly of the head domain of the 30S subunit. Is located at the subunit interface close to the decoding center, probably blocks exit of the E-site tRNA. The polypeptide is Small ribosomal subunit protein uS7 (Levilactobacillus brevis (strain ATCC 367 / BCRC 12310 / CIP 105137 / JCM 1170 / LMG 11437 / NCIMB 947 / NCTC 947) (Lactobacillus brevis)).